The following is an 864-amino-acid chain: Leucine--tRNA ligase (864 aa).

Positions 42–52 match the 'HIGH' region motif; sequence PYPSGKLHMGH. Positions 624–628 match the 'KMSKS' region motif; it reads KMSKS. Lysine 627 contacts ATP.

Belongs to the class-I aminoacyl-tRNA synthetase family.

It localises to the cytoplasm. The enzyme catalyses tRNA(Leu) + L-leucine + ATP = L-leucyl-tRNA(Leu) + AMP + diphosphate. The polypeptide is Leucine--tRNA ligase (Burkholderia thailandensis (strain ATCC 700388 / DSM 13276 / CCUG 48851 / CIP 106301 / E264)).